The primary structure comprises 507 residues: Interleukin-17 receptor E-like protein (507 aa).

The signal sequence occupies residues 1 to 21 (MLAGQALAFLGLTWGTFQSLA).

It is found in the secreted. The polypeptide is Interleukin-17 receptor E-like protein (Homo sapiens (Human)).